The primary structure comprises 425 residues: Isocitrate dehydrogenase [NADP] (425 aa).

Threonine 114 contributes to the NADP(+) binding site. D-threo-isocitrate is bound by residues serine 123, asparagine 125, arginine 129, arginine 139, and arginine 162. Residue aspartate 316 coordinates Mg(2+). Residues 348–354 (HGTAPKY), asparagine 361, tyrosine 400, and arginine 404 each bind NADP(+).

Belongs to the isocitrate and isopropylmalate dehydrogenases family. As to quaternary structure, homodimer. The cofactor is Mg(2+). Mn(2+) serves as cofactor.

It catalyses the reaction D-threo-isocitrate + NADP(+) = 2-oxoglutarate + CO2 + NADPH. In terms of biological role, catalyzes the oxidative decarboxylation of isocitrate to 2-oxoglutarate and carbon dioxide with the concomitant reduction of NADP(+). The polypeptide is Isocitrate dehydrogenase [NADP] (icd) (Helicobacter pylori (strain J99 / ATCC 700824) (Campylobacter pylori J99)).